The following is a 929-amino-acid chain: Isoleucine--tRNA ligase (929 aa).

The 'HIGH' region signature appears at 58–68 (PYANGDIHIGH). Glu-563 provides a ligand contact to L-isoleucyl-5'-AMP. Positions 605–609 (KMSKS) match the 'KMSKS' region motif. Position 608 (Lys-608) interacts with ATP. Residues Cys-892, Cys-895, Cys-912, and Cys-915 each coordinate Zn(2+).

It belongs to the class-I aminoacyl-tRNA synthetase family. IleS type 1 subfamily. As to quaternary structure, monomer. Zn(2+) is required as a cofactor.

The protein localises to the cytoplasm. The catalysed reaction is tRNA(Ile) + L-isoleucine + ATP = L-isoleucyl-tRNA(Ile) + AMP + diphosphate. In terms of biological role, catalyzes the attachment of isoleucine to tRNA(Ile). As IleRS can inadvertently accommodate and process structurally similar amino acids such as valine, to avoid such errors it has two additional distinct tRNA(Ile)-dependent editing activities. One activity is designated as 'pretransfer' editing and involves the hydrolysis of activated Val-AMP. The other activity is designated 'posttransfer' editing and involves deacylation of mischarged Val-tRNA(Ile). In Neisseria gonorrhoeae (strain NCCP11945), this protein is Isoleucine--tRNA ligase.